A 230-amino-acid chain; its full sequence is Ribose-5-phosphate isomerase A (230 aa).

Residues 29 to 32, 85 to 88, and 99 to 102 each bind substrate; these read TGST, DGAD, and KGAG. Glu-108 acts as the Proton acceptor in catalysis. Residue Lys-126 participates in substrate binding.

It belongs to the ribose 5-phosphate isomerase family. In terms of assembly, homodimer.

It catalyses the reaction aldehydo-D-ribose 5-phosphate = D-ribulose 5-phosphate. The protein operates within carbohydrate degradation; pentose phosphate pathway; D-ribose 5-phosphate from D-ribulose 5-phosphate (non-oxidative stage): step 1/1. Its function is as follows. Catalyzes the reversible conversion of ribose-5-phosphate to ribulose 5-phosphate. The chain is Ribose-5-phosphate isomerase A from Synechococcus sp. (strain JA-3-3Ab) (Cyanobacteria bacterium Yellowstone A-Prime).